A 591-amino-acid polypeptide reads, in one-letter code: Solute carrier family 40 member 2, chloroplastic (591 aa).

The N-terminal 66 residues, 1–66 (MGMVTATAAA…RCYITNVEVD (66 aa)), are a transit peptide targeting the chloroplast. The next 11 helical transmembrane spans lie at 159–179 (WPAA…VGFF), 206–226 (GLNA…IYAM), 242–262 (WFIA…ALGV), 293–313 (LVCE…YHPV), 318–338 (IACG…QLIN), 391–411 (VATV…MTAL), 419–439 (PSIV…ATFI), 452–472 (AGAA…VVYW), 482–502 (LLIF…YDVV), 518–540 (LIGG…MAII), and 547–569 (FGFL…CQWL).

It belongs to the ferroportin (FP) (TC 2.A.100) family. SLC40A subfamily.

It localises to the membrane. The protein localises to the plastid. Its subcellular location is the chloroplast envelope. Its function is as follows. May be involved in iron transport and iron homeostasis. The sequence is that of Solute carrier family 40 member 2, chloroplastic from Oryza sativa subsp. japonica (Rice).